The chain runs to 467 residues: Probable protein phosphatase 2C 55 (467 aa).

One can recognise a PPM-type phosphatase domain in the interval 222–458; sequence SCYLPHPDKE…DDITVVVSYV (237 aa). The Mn(2+) site is built by Asp-252, Gly-253, Asp-383, and Asp-449.

This sequence belongs to the PP2C family. The cofactor is Mg(2+). Mn(2+) serves as cofactor.

The catalysed reaction is O-phospho-L-seryl-[protein] + H2O = L-seryl-[protein] + phosphate. It carries out the reaction O-phospho-L-threonyl-[protein] + H2O = L-threonyl-[protein] + phosphate. This Arabidopsis thaliana (Mouse-ear cress) protein is Probable protein phosphatase 2C 55.